A 297-amino-acid polypeptide reads, in one-letter code: MATH domain and coiled-coil domain-containing protein At2g05420 (297 aa).

An MATH domain is found at 7 to 139 (SKTITWVIEN…NGELTLVAKV (133 aa)). Positions 239–281 (KLDWLEKKHGEIKEKKKKEEASLKRLQEMEKQIFNEAQIYKEK) form a coiled coil.

This is MATH domain and coiled-coil domain-containing protein At2g05420 from Arabidopsis thaliana (Mouse-ear cress).